The primary structure comprises 229 residues: UPF0758 protein Caur_3603 (229 aa).

Residues 105 to 227 (PIRSPADVAT…YVSLRERGLG (123 aa)) enclose the MPN domain. 3 residues coordinate Zn(2+): His176, His178, and Asp189. The short motif at 176-189 (HNHPSGEPTPSMED) is the JAMM motif element.

The protein belongs to the UPF0758 family.

In Chloroflexus aurantiacus (strain ATCC 29366 / DSM 635 / J-10-fl), this protein is UPF0758 protein Caur_3603.